The primary structure comprises 320 residues: Ferrochelatase (320 aa).

2 residues coordinate Fe cation: H194 and E275.

This sequence belongs to the ferrochelatase family.

The protein resides in the cytoplasm. The catalysed reaction is heme b + 2 H(+) = protoporphyrin IX + Fe(2+). It functions in the pathway porphyrin-containing compound metabolism; protoheme biosynthesis; protoheme from protoporphyrin-IX: step 1/1. In terms of biological role, catalyzes the ferrous insertion into protoporphyrin IX. This Stenotrophomonas maltophilia (strain R551-3) protein is Ferrochelatase.